The following is a 139-amino-acid chain: Maintenance of telomere capping protein 7 (139 aa).

Helical transmembrane passes span 13–33 (SHHVLFAEPGFFLCNFFFVLL) and 42–62 (FYFLFILLFIIYIAIIYFVFI). A disordered region spans residues 94-121 (RSVANPALPPQKKKKKKKKGTLRTGEVE). Positions 104-114 (QKKKKKKKKGT) are enriched in basic residues.

It localises to the membrane. May be involved in telomere capping. In Saccharomyces cerevisiae (strain ATCC 204508 / S288c) (Baker's yeast), this protein is Maintenance of telomere capping protein 7 (MTC7).